Here is a 389-residue protein sequence, read N- to C-terminus: UDP-N-acetylglucosamine--N-acetylmuramyl-(pentapeptide) pyrophosphoryl-undecaprenol N-acetylglucosamine transferase (389 aa).

UDP-N-acetyl-alpha-D-glucosamine contacts are provided by residues 17-19 (TAG), N137, R179, S213, and Q308.

This sequence belongs to the glycosyltransferase 28 family. MurG subfamily.

It is found in the cell membrane. It catalyses the reaction di-trans,octa-cis-undecaprenyl diphospho-N-acetyl-alpha-D-muramoyl-L-alanyl-D-glutamyl-meso-2,6-diaminopimeloyl-D-alanyl-D-alanine + UDP-N-acetyl-alpha-D-glucosamine = di-trans,octa-cis-undecaprenyl diphospho-[N-acetyl-alpha-D-glucosaminyl-(1-&gt;4)]-N-acetyl-alpha-D-muramoyl-L-alanyl-D-glutamyl-meso-2,6-diaminopimeloyl-D-alanyl-D-alanine + UDP + H(+). It functions in the pathway cell wall biogenesis; peptidoglycan biosynthesis. Its function is as follows. Cell wall formation. Catalyzes the transfer of a GlcNAc subunit on undecaprenyl-pyrophosphoryl-MurNAc-pentapeptide (lipid intermediate I) to form undecaprenyl-pyrophosphoryl-MurNAc-(pentapeptide)GlcNAc (lipid intermediate II). The protein is UDP-N-acetylglucosamine--N-acetylmuramyl-(pentapeptide) pyrophosphoryl-undecaprenol N-acetylglucosamine transferase of Rhodococcus erythropolis (strain PR4 / NBRC 100887).